The chain runs to 327 residues: Eukaryotic translation initiation factor 3 subunit I (327 aa).

5 WD repeats span residues 8 to 47 (GHQR…RLGT), 50 to 89 (GHIG…ALGK), 147 to 186 (EQQS…ELNS), 189 to 228 (DHTA…CLKT), and 286 to 327 (GHFG…HTFE).

This sequence belongs to the eIF-3 subunit I family. As to quaternary structure, component of the eukaryotic translation initiation factor 3 (eIF-3) complex.

The protein resides in the cytoplasm. Its function is as follows. Component of the eukaryotic translation initiation factor 3 (eIF-3) complex, which is involved in protein synthesis of a specialized repertoire of mRNAs and, together with other initiation factors, stimulates binding of mRNA and methionyl-tRNAi to the 40S ribosome. The eIF-3 complex specifically targets and initiates translation of a subset of mRNAs involved in cell proliferation. This chain is Eukaryotic translation initiation factor 3 subunit I, found in Anopheles gambiae (African malaria mosquito).